A 264-amino-acid polypeptide reads, in one-letter code: Thymidylate synthase (264 aa).

Residue Arg-21 coordinates dUMP. Residue His-51 coordinates (6R)-5,10-methylene-5,6,7,8-tetrahydrofolate. 126–127 (RR) provides a ligand contact to dUMP. Cys-146 functions as the Nucleophile in the catalytic mechanism. Residues 166-169 (RSCD), Asn-177, and 207-209 (HLY) each bind dUMP. Asp-169 contacts (6R)-5,10-methylene-5,6,7,8-tetrahydrofolate. A (6R)-5,10-methylene-5,6,7,8-tetrahydrofolate-binding site is contributed by Ala-263.

It belongs to the thymidylate synthase family. Bacterial-type ThyA subfamily. Homodimer.

Its subcellular location is the cytoplasm. It catalyses the reaction dUMP + (6R)-5,10-methylene-5,6,7,8-tetrahydrofolate = 7,8-dihydrofolate + dTMP. It functions in the pathway pyrimidine metabolism; dTTP biosynthesis. Catalyzes the reductive methylation of 2'-deoxyuridine-5'-monophosphate (dUMP) to 2'-deoxythymidine-5'-monophosphate (dTMP) while utilizing 5,10-methylenetetrahydrofolate (mTHF) as the methyl donor and reductant in the reaction, yielding dihydrofolate (DHF) as a by-product. This enzymatic reaction provides an intracellular de novo source of dTMP, an essential precursor for DNA biosynthesis. This is Thymidylate synthase from Salmonella arizonae (strain ATCC BAA-731 / CDC346-86 / RSK2980).